An 874-amino-acid chain; its full sequence is Alanine--tRNA ligase (874 aa).

H562, H566, C663, and H667 together coordinate Zn(2+).

This sequence belongs to the class-II aminoacyl-tRNA synthetase family. Requires Zn(2+) as cofactor.

It localises to the cytoplasm. The catalysed reaction is tRNA(Ala) + L-alanine + ATP = L-alanyl-tRNA(Ala) + AMP + diphosphate. Its function is as follows. Catalyzes the attachment of alanine to tRNA(Ala) in a two-step reaction: alanine is first activated by ATP to form Ala-AMP and then transferred to the acceptor end of tRNA(Ala). Also edits incorrectly charged Ser-tRNA(Ala) and Gly-tRNA(Ala) via its editing domain. The polypeptide is Alanine--tRNA ligase (Bordetella bronchiseptica (strain ATCC BAA-588 / NCTC 13252 / RB50) (Alcaligenes bronchisepticus)).